A 135-amino-acid chain; its full sequence is Sex-regulated protein janus-A (135 aa).

Substrate is bound at residue Lys37. Catalysis depends on His63, which acts as the Proton acceptor. Ser104–Gly106 provides a ligand contact to substrate.

This sequence belongs to the janus family.

Functionally, janA and janB regulate somatic sex differentiation. The chain is Sex-regulated protein janus-A (janA) from Drosophila erecta (Fruit fly).